Consider the following 483-residue polypeptide: Glutamyl-tRNA(Gln) amidotransferase subunit A (483 aa).

Active-site charge relay system residues include lysine 76 and serine 151. The active-site Acyl-ester intermediate is the serine 175.

Belongs to the amidase family. GatA subfamily. As to quaternary structure, heterotrimer of A, B and C subunits.

The catalysed reaction is L-glutamyl-tRNA(Gln) + L-glutamine + ATP + H2O = L-glutaminyl-tRNA(Gln) + L-glutamate + ADP + phosphate + H(+). Allows the formation of correctly charged Gln-tRNA(Gln) through the transamidation of misacylated Glu-tRNA(Gln) in organisms which lack glutaminyl-tRNA synthetase. The reaction takes place in the presence of glutamine and ATP through an activated gamma-phospho-Glu-tRNA(Gln). The polypeptide is Glutamyl-tRNA(Gln) amidotransferase subunit A (Coxiella burnetii (strain CbuK_Q154) (Coxiella burnetii (strain Q154))).